Consider the following 2496-residue polypeptide: Non-reducing polyketide synthase adrD (2496 aa).

Residues 15-254 (LVFGPQIAEI…HHASHITAVQ (240 aa)) form an N-terminal acylcarrier protein transacylase domain (SAT) region. The 422-residue stretch at 387 to 808 (ATPIAITGMG…GSNAALVVKQ (422 aa)) folds into the Ketosynthase family 3 (KS3) domain. Active-site for beta-ketoacyl synthase activity residues include C552, H687, and H726. A malonyl-CoA:ACP transacylase (MAT) domain region spans residues 914–1223 (LCFGGQNGNE…QSLDLGGPQG (310 aa)). Catalysis depends on S1001, which acts as the For acyl/malonyl transferase activity. The tract at residues 1295-1423 (KEFVQLLTKQ…GEISLHPFGQ (129 aa)) is N-terminal hotdog fold. The PKS/mFAS DH domain maps to 1295–1602 (KEFVQLLTKQ…FTSVSIAGLA (308 aa)). Residues 1296-1601 (EFVQLLTKQP…EFTSVSIAGL (306 aa)) form a product template (PT) domain region. Catalysis depends on H1326, which acts as the Proton acceptor; for dehydratase activity. Residues 1451 to 1602 (ESSGLKGFAV…FTSVSIAGLA (152 aa)) are C-terminal hotdog fold. D1509 serves as the catalytic Proton donor; for dehydratase activity. A compositionally biased stretch (basic and acidic residues) spans 1615–1629 (EKASPDLSLRNDSKV). Positions 1615-1645 (EKASPDLSLRNDSKVDVNPTPQNTAPVVQPT) are disordered. Polar residues predominate over residues 1633–1645 (PTPQNTAPVVQPT). Residues 1652–1726 (PGYFVVVQEM…ALVQTIFPDA (75 aa)) enclose the Carrier domain. S1686 carries the post-translational modification O-(pantetheine 4'-phosphoryl)serine. Positions 1888–2121 (QHRSEHHLLK…GFQWVDWTHN (234 aa)) are methyltransferase (CMeT) domain. Residues 2151–2496 (RVMNEETVPY…YEFLRDHVRY (346 aa)) form a thioesterase (TE) domain region. Active-site for thioesterase activity residues include S2274 and D2433.

It catalyses the reaction 3 malonyl-CoA + acetyl-CoA + 2 S-adenosyl-L-methionine = 3,5-dimethylorsellinate + 2 S-adenosyl-L-homocysteine + 3 CO2 + 4 CoA. It functions in the pathway secondary metabolite biosynthesis; terpenoid biosynthesis. In terms of biological role, non-reducing polyketide synthase; part of the gene cluster that mediates the biosynthesis of andrastins, meroterpenoid compounds that exhibit inhibitory activity against ras farnesyltransferase, suggesting that they could be promising leads for antitumor agents. The first step of the pathway is the synthesis of 3,5-dimethylorsellinic acid (DMOA) by the polyketide synthase adrD via condensation of one acetyl-CoA starter unit with 3 malonyl-CoA units and 2 methylations. DMAO is then converted to farnesyl-DMAO by the prenyltransferase adrG. The methyltransferase adrK catalyzes the methylation of the carboxyl group of farnesyl-DMAO to farnesyl-DMAO methyl ester which is further converted to epoxyfarnesyl-DMAO methyl ester by the FAD-dependent monooxygenase adrH. The terpene cyclase adrI then catalyzes the carbon skeletal rearrangement to generate the andrastin E, the first compound in the pathway having the andrastin scaffold, with the tetracyclic ring system. The post-cyclization tailoring enzymes adrF, adrE, adrJ, and adrA, are involved in the conversion of andrastin E into andrastin A. The short chain dehydrogenase adrF is responsible for the oxidation of the C-3 a hydroxyl group of andrastin E to yield the corresponding ketone, andrastin D. The ketoreductase adrE stereoselectively reduces the carbonyl moiety to reverse the stereochemistry of the C-3 position to yield andrastin F. The acetyltransferase adrJ is the acetyltransferase that attaches the acetyl group to the C-3 hydroxyl group of andrastin F to yield andrastin C. Finally, the cytochrome P450 monooxygenase adrA catalyzes two sequential oxidation reactions of the C-23 methyl group, to generate the corresponding alcohol andrastin B, and aldehyde andrastin A. This chain is Non-reducing polyketide synthase adrD, found in Penicillium rubens (strain ATCC 28089 / DSM 1075 / NRRL 1951 / Wisconsin 54-1255) (Penicillium chrysogenum).